The chain runs to 300 residues: DNA repair protein RecO (300 aa).

This sequence belongs to the RecO family.

In terms of biological role, involved in DNA repair and RecF pathway recombination. The chain is DNA repair protein RecO from Nostoc punctiforme (strain ATCC 29133 / PCC 73102).